Here is a 384-residue protein sequence, read N- to C-terminus: V-type proton ATPase subunit C 2 (384 aa).

This sequence belongs to the V-ATPase C subunit family. V-ATPase is a heteromultimeric enzyme made up of two complexes: the ATP-hydrolytic V1 complex and the proton translocation V0 complex. The V1 complex consists of three catalytic AB heterodimers that form a heterohexamer, three peripheral stalks each consisting of EG heterodimers, one central rotor including subunits D and F, and the regulatory subunits C and H. The proton translocation complex V0 consists of the proton transport subunit a, a ring of proteolipid subunits c9c'', rotary subunit d, subunits e and f, and the accessory subunits vah-19/Ac45 and vah-20/PRR.

Subunit of the V1 complex of vacuolar(H+)-ATPase (V-ATPase), a multisubunit enzyme composed of a peripheral complex (V1) that hydrolyzes ATP and a membrane integral complex (V0) that translocates protons. V-ATPase is responsible for acidifying and maintaining the pH of intracellular compartments and in some cell types, is targeted to the plasma membrane, where it is responsible for acidifying the extracellular environment. Subunit C is necessary for the assembly of the catalytic sector of the enzyme and is likely to have a specific function in its catalytic activity. The polypeptide is V-type proton ATPase subunit C 2 (VATC) (Ascidia sydneiensis samea (Vanadium-rich ascidian)).